The chain runs to 700 residues: Endoglucanase A (700 aa).

A signal peptide spans 1 to 33 (MKTRQRKRLFVSAALAVSLTMTVPMPASVNAAA). Glu-213 is a catalytic residue. Residues 550 to 700 (NSDLVVQYKD…DGQLVWGIEP (151 aa)) enclose the CBM3 domain.

This sequence belongs to the glycosyl hydrolase 44 (cellulase J) family. Post-translationally, a short form (EG-A-S) arises from post-translational proteolysis of approximately 150 AA at the C-terminus of EG-A-L.

It catalyses the reaction Endohydrolysis of (1-&gt;4)-beta-D-glucosidic linkages in cellulose, lichenin and cereal beta-D-glucans.. This is Endoglucanase A (celA) from Paenibacillus lautus (Bacillus lautus).